A 173-amino-acid chain; its full sequence is Protein GrpE (173 aa).

Basic and acidic residues predominate over residues methionine 1–threonine 20. Positions methionine 1–serine 23 are disordered.

This sequence belongs to the GrpE family. As to quaternary structure, homodimer.

The protein localises to the cytoplasm. Functionally, participates actively in the response to hyperosmotic and heat shock by preventing the aggregation of stress-denatured proteins, in association with DnaK and GrpE. It is the nucleotide exchange factor for DnaK and may function as a thermosensor. Unfolded proteins bind initially to DnaJ; upon interaction with the DnaJ-bound protein, DnaK hydrolyzes its bound ATP, resulting in the formation of a stable complex. GrpE releases ADP from DnaK; ATP binding to DnaK triggers the release of the substrate protein, thus completing the reaction cycle. Several rounds of ATP-dependent interactions between DnaJ, DnaK and GrpE are required for fully efficient folding. In Thiobacillus denitrificans (strain ATCC 25259 / T1), this protein is Protein GrpE.